The chain runs to 399 residues: STOREKEEPER protein (399 aa).

Disordered stretches follow at residues 1-160 (MAPK…RSLW) and 250-301 (GISN…EEQQ). The segment covering 20-54 (EEQELVEESQEEEEQQSREEEGEEESGEETEEDEE) has biased composition (acidic residues). Residues 69 to 79 (KLVQTPQKPQF) show a composition bias toward polar residues. 2 stretches are compositionally biased toward low complexity: residues 80-100 (SSES…SGNS) and 116-125 (AAKAATPSKP). Composition is skewed to basic and acidic residues over residues 143–152 (KIAEEEEKKS) and 270–299 (KTVE…KEEE).

This sequence belongs to the GeBP family. Expressed in tubers and in leaves treated with sucrose.

The protein resides in the nucleus. In terms of biological role, may act as a transcriptional regulator. Binds specifically to the B-box motif, a promoter element that is required for the tuber-specific and sucrose inducible expression of the patatin gene. The polypeptide is STOREKEEPER protein (Solanum tuberosum (Potato)).